A 119-amino-acid polypeptide reads, in one-letter code: uncharacterized protein (119 aa).

The first 30 residues, methionine 1 to glycine 30, serve as a signal peptide directing secretion.

This is an uncharacterized protein from Escherichia coli (strain UTI89 / UPEC).